The primary structure comprises 203 residues: Nucleoside triphosphate pyrophosphatase (203 aa).

The active-site Proton acceptor is D77.

The protein belongs to the Maf family. It depends on a divalent metal cation as a cofactor.

The protein localises to the cytoplasm. The catalysed reaction is a ribonucleoside 5'-triphosphate + H2O = a ribonucleoside 5'-phosphate + diphosphate + H(+). The enzyme catalyses a 2'-deoxyribonucleoside 5'-triphosphate + H2O = a 2'-deoxyribonucleoside 5'-phosphate + diphosphate + H(+). In terms of biological role, nucleoside triphosphate pyrophosphatase. May have a dual role in cell division arrest and in preventing the incorporation of modified nucleotides into cellular nucleic acids. This is Nucleoside triphosphate pyrophosphatase from Rickettsia felis (strain ATCC VR-1525 / URRWXCal2) (Rickettsia azadi).